The sequence spans 335 residues: Protein-arginine kinase (335 aa).

A Phosphagen kinase C-terminal domain is found at 20–243 (IVMSSRIRLA…QQIINEEMQI (224 aa)). Residues 23-27 (SSRIR), histidine 81, arginine 114, 165-169 (RASVM), and 196-201 (RGIYGE) contribute to the ATP site.

It belongs to the ATP:guanido phosphotransferase family.

The enzyme catalyses L-arginyl-[protein] + ATP = N(omega)-phospho-L-arginyl-[protein] + ADP + H(+). In terms of biological role, catalyzes the specific phosphorylation of arginine residues in proteins. The polypeptide is Protein-arginine kinase (Staphylococcus haemolyticus (strain JCSC1435)).